We begin with the raw amino-acid sequence, 293 residues long: ATP synthase gamma chain (293 aa).

This sequence belongs to the ATPase gamma chain family. As to quaternary structure, F-type ATPases have 2 components, CF(1) - the catalytic core - and CF(0) - the membrane proton channel. CF(1) has five subunits: alpha(3), beta(3), gamma(1), delta(1), epsilon(1). CF(0) has three main subunits: a, b and c.

The protein localises to the cell inner membrane. Produces ATP from ADP in the presence of a proton gradient across the membrane. The gamma chain is believed to be important in regulating ATPase activity and the flow of protons through the CF(0) complex. The polypeptide is ATP synthase gamma chain (Psychrobacter cryohalolentis (strain ATCC BAA-1226 / DSM 17306 / VKM B-2378 / K5)).